The primary structure comprises 130 residues: Small ribosomal subunit protein uS11c (130 aa).

The protein belongs to the universal ribosomal protein uS11 family. As to quaternary structure, part of the 30S ribosomal subunit.

Its subcellular location is the plastid. It localises to the chloroplast. The sequence is that of Small ribosomal subunit protein uS11c from Spirogyra maxima (Green alga).